A 415-amino-acid polypeptide reads, in one-letter code: MIRVMAGAKFLNGMVKVAEDAYLFHVIHSKSLAVLMGTADSDVPLPLLFSKFPGSPTNAIPLYCYERPRLSLARLILSGHPYALHSELEIGFSDAGGEITVYRCPIVKYTDFRDEPVKADCTLMFSSREDMSDATPLTEDLYPRIGSRCKIKHVTIDESKNQSFFFDKDAAIRAPAPCSPAPCSPAPGSPPPPAPPAAPAKPIIKCQLEPADEELARFTGYARIFHAISTHSPKIGSCGAASYNTVLIMTRSQNSLRVLPRDGSITPRHNLFLKHVILKEMGLENSVQDFEVLYGDHLGPVTRQQAEEFRETVRGLRCKLEDCVFVLNSVCAAPFSKPVAAGSTGPHTLLLLEKYFLTFNPRDKANAINFGAAVTELIFGGVPFTKILAFVQKFIEILTETPEDNMFKIYALLTN.

Residues 179 to 199 (SPAPCSPAPGSPPPPAPPAAP) show a composition bias toward pro residues. The tract at residues 179–200 (SPAPCSPAPGSPPPPAPPAAPA) is disordered.

This sequence belongs to the herpesviridae BTRF1 family.

This is an uncharacterized protein from Equus caballus (Horse).